We begin with the raw amino-acid sequence, 749 residues long: Polyribonucleotide nucleotidyltransferase (749 aa).

Residues aspartate 487 and aspartate 493 each coordinate Mg(2+). Positions 554-613 (PSTTTIKIDKDKIRDIIGPGGKIIKEICETSGAKIDISDDGTVSVYASDRDKLKVALDKI) constitute a KH domain. In terms of domain architecture, S1 motif spans 623–691 (GEIFNGTVVK…NKGKAKLTIK (69 aa)). A disordered region spans residues 691 to 749 (KNADKDKSSNNTKPKTNVNNTNKDNSEPEQRRDSSKKRAWNEDNNAETAEVITERKYFN). Over residues 699-713 (SNNTKPKTNVNNTNK) the composition is skewed to low complexity. Residues 714 to 723 (DNSEPEQRRD) are compositionally biased toward basic and acidic residues.

The protein belongs to the polyribonucleotide nucleotidyltransferase family. It depends on Mg(2+) as a cofactor.

It is found in the cytoplasm. It carries out the reaction RNA(n+1) + phosphate = RNA(n) + a ribonucleoside 5'-diphosphate. Functionally, involved in mRNA degradation. Catalyzes the phosphorolysis of single-stranded polyribonucleotides processively in the 3'- to 5'-direction. This chain is Polyribonucleotide nucleotidyltransferase, found in Rickettsia conorii (strain ATCC VR-613 / Malish 7).